We begin with the raw amino-acid sequence, 96 residues long: Secretoglobin family 2B member 2 (96 aa).

Positions 1–23 (MRVTSATCALLLALICSVQLGDA) are cleaved as a signal peptide.

This sequence belongs to the secretoglobin family.

The protein resides in the secreted. This Homo sapiens (Human) protein is Secretoglobin family 2B member 2 (SCGB2B2).